A 311-amino-acid polypeptide reads, in one-letter code: Protease HtpX homolog 1 (311 aa).

2 helical membrane passes run 12 to 32 and 35 to 55; these read IIAL…IINF and FPVI…WLIS. Position 137 (histidine 137) interacts with Zn(2+). The active site involves glutamate 138. Residue histidine 141 coordinates Zn(2+). 2 helical membrane passes run 159-179 and 184-204; these read ILGF…IFAV and ILVG…TFFL. Glutamate 216 is a binding site for Zn(2+).

The protein belongs to the peptidase M48B family. It depends on Zn(2+) as a cofactor.

It is found in the cell membrane. The chain is Protease HtpX homolog 1 from Sulfurisphaera tokodaii (strain DSM 16993 / JCM 10545 / NBRC 100140 / 7) (Sulfolobus tokodaii).